The following is a 311-amino-acid chain: tRNA dimethylallyltransferase (311 aa).

19 to 26 contributes to the ATP binding site; that stretch reads GPSGSGKS. 21–26 contributes to the substrate binding site; that stretch reads SGSGKS. The interval 44 to 47 is interaction with substrate tRNA; that stretch reads DSLS.

This sequence belongs to the IPP transferase family. In terms of assembly, monomer. Mg(2+) serves as cofactor.

The enzyme catalyses adenosine(37) in tRNA + dimethylallyl diphosphate = N(6)-dimethylallyladenosine(37) in tRNA + diphosphate. Its function is as follows. Catalyzes the transfer of a dimethylallyl group onto the adenine at position 37 in tRNAs that read codons beginning with uridine, leading to the formation of N6-(dimethylallyl)adenosine (i(6)A). This chain is tRNA dimethylallyltransferase, found in Helicobacter pylori (strain ATCC 700392 / 26695) (Campylobacter pylori).